Here is a 531-residue protein sequence, read N- to C-terminus: MIFDTEEFKKRGKEDFESAWHAGPSVLTPPTTDLMYPRLTYLRAQAHPVFETIHRLREAYLAIGFQEAENPIIVDEQEVYRQFGPEAMAVLDRVFYLGGLPRPNVGIGKEQIQKINSILGRDLSEDEEESLRKTLHAYKKSEIDGDELAYELSGVLHTDDARIVEILDRVFPEFRALKPESSRQTLRSHMTSGWFQTLGAIWEKVPHPIRLFSIDRCFRREQAEDSHRLMSYHSASCVVAGEYVTIEDGKAVARALLSAFGYTDFEFRPDDKRSKYYMPDTQTEVYAAHPDHGWVEVATFGIYSPVALAEYGVGIPVMNLGLGVERMAMIMNKAKDVRELCFPQFFPIRYTDTELAAGVSLLAEPATTPGKNLVRSLINTAVTHSTAIGPCSFVAFEGEIAGKQIRVYVEEPEENAKLLGPACMNEIFVHKGAILGVPDTEKFAEVRKNGISTGISYLFAAASQAAAEIEQAAHFGIPTTVQIKMARLPGDINLKIEPWVMRYITDNNLKTDVRGPVFLTIRSEVLPTSEV.

Substrate contacts are provided by residues 189–191 (HMT), 234–236 (SAS), 276–277 (YY), and asparagine 319.

Belongs to the class-II aminoacyl-tRNA synthetase family. O-phosphoseryl-tRNA(Cys) synthetase subfamily. As to quaternary structure, homotetramer. Interacts with SepCysS.

It catalyses the reaction tRNA(Cys) + O-phospho-L-serine + ATP = O-phospho-L-seryl-tRNA(Cys) + AMP + diphosphate. Catalyzes the attachment of O-phosphoserine (Sep) to tRNA(Cys). The protein is O-phosphoserine--tRNA(Cys) ligase of Methanospirillum hungatei JF-1 (strain ATCC 27890 / DSM 864 / NBRC 100397 / JF-1).